The following is a 392-amino-acid chain: Elongation factor Tu 2 (392 aa).

The tr-type G domain maps to 10 to 201 (KPHVNIGTIG…AVDSYIPTPE (192 aa)). Residues 19–26 (GHVDHGKT) form a G1 region. Position 19–26 (19–26 (GHVDHGKT)) interacts with GTP. Threonine 26 lines the Mg(2+) pocket. The G2 stretch occupies residues 55 to 59 (GITIS). The interval 76-79 (DCPG) is G3. GTP is bound by residues 76–80 (DCPGH) and 131–134 (NKVD). Residues 131–134 (NKVD) form a G4 region. The G5 stretch occupies residues 169–171 (SAL).

Belongs to the TRAFAC class translation factor GTPase superfamily. Classic translation factor GTPase family. EF-Tu/EF-1A subfamily. Monomer.

The protein resides in the cytoplasm. The catalysed reaction is GTP + H2O = GDP + phosphate + H(+). GTP hydrolase that promotes the GTP-dependent binding of aminoacyl-tRNA to the A-site of ribosomes during protein biosynthesis. The chain is Elongation factor Tu 2 from Rhizobium etli (strain ATCC 51251 / DSM 11541 / JCM 21823 / NBRC 15573 / CFN 42).